The sequence spans 42 residues: Delta-hexatoxin-Hv1b (42 aa).

4 cysteine pairs are disulfide-bonded: Cys-1/Cys-15, Cys-8/Cys-20, Cys-14/Cys-31, and Cys-16/Cys-42.

This sequence belongs to the neurotoxin 06 (delta-actx) family. As to expression, expressed by the venom gland.

It is found in the secreted. Its function is as follows. Lethal neurotoxin. Slows the inactivation of tetrodotoxin-sensitive voltage-gated sodium channels (Nav) by binding to site 3 of the channel, resulting in repetitive firing in autonomic and motor nerve fibers. The protein is Delta-hexatoxin-Hv1b of Hadronyche versuta (Blue mountains funnel-web spider).